Here is a 227-residue protein sequence, read N- to C-terminus: uncharacterized protein (227 aa).

The helical transmembrane segment at 7–26 threads the bilayer; it reads IITLTILIFISGLLTAFLLL.

It localises to the membrane. This is an uncharacterized protein from Haemophilus influenzae (strain ATCC 51907 / DSM 11121 / KW20 / Rd).